Reading from the N-terminus, the 326-residue chain is GATA zinc finger domain-containing protein 21 (326 aa).

2 disordered regions span residues 1-102 and 145-238; these read MFRN…NNNN and QNQS…TPER. 2 stretches are compositionally biased toward low complexity: residues 17–102 and 148–164; these read NTNL…NNNN and SSSSSSGASGSRSGSSA. Residues 165–189 are compositionally biased toward polar residues; the sequence is LNSINNNNYSPTTSSLNRVRNQYNQ. The segment covering 193–218 has biased composition (acidic residues); the sequence is DEEDDDYDNGAEDGFDYDGDDNEDGS. The segment at 239–266 adopts a GATA-type zinc-finger fold; that stretch reads CSNCKITHSSYWRRITVNGQKLDFCNAC. Residues 277 to 326 form a disordered region; sequence IKESKQRHSIQNIMNQNQEEEEEEREEEEEEEEEEDEEFETLEEEEEDDE. The segment covering 294-326 has biased composition (acidic residues); it reads QEEEEEEREEEEEEEEEEDEEFETLEEEEEDDE.

This Dictyostelium discoideum (Social amoeba) protein is GATA zinc finger domain-containing protein 21 (gtaU).